A 278-amino-acid polypeptide reads, in one-letter code: Large ribosomal subunit protein uL2 (278 aa).

Disordered stretches follow at residues 1–59 (MAIR…GGHK) and 222–278 (RGAA…NKKR). Polar residues predominate over residues 16–27 (SSVSEFSEITRS). Basic residues-rich tracts occupy residues 45-59 (VHGH…GGHK) and 269-278 (VRRRRPNKKR).

This sequence belongs to the universal ribosomal protein uL2 family. As to quaternary structure, part of the 50S ribosomal subunit. Forms a bridge to the 30S subunit in the 70S ribosome.

Functionally, one of the primary rRNA binding proteins. Required for association of the 30S and 50S subunits to form the 70S ribosome, for tRNA binding and peptide bond formation. It has been suggested to have peptidyltransferase activity; this is somewhat controversial. Makes several contacts with the 16S rRNA in the 70S ribosome. This is Large ribosomal subunit protein uL2 from Corynebacterium urealyticum (strain ATCC 43042 / DSM 7109).